A 338-amino-acid polypeptide reads, in one-letter code: LIX1-like protein (338 aa).

The tract at residues 1–65 (METMRAQRLQ…LLLAGAPGLP (65 aa)) is disordered. Positions 29 to 38 (TGAPTSAATP) are enriched in low complexity. Over residues 39 to 56 (PAGPPPAPPPPAPPPPPL) the composition is skewed to pro residues.

Belongs to the LIX1 family.

This chain is LIX1-like protein (Lix1l), found in Rattus norvegicus (Rat).